A 136-amino-acid polypeptide reads, in one-letter code: Group 1 truncated hemoglobin GlbN (136 aa).

His81 contacts heme.

Belongs to the truncated hemoglobin family. Group I subfamily. As to quaternary structure, homodimer. The cofactor is heme.

Binds oxygen cooperatively with very high affinity because of a fast combination and a slow dissociation rate. This Mycolicibacterium paratuberculosis (strain ATCC BAA-968 / K-10) (Mycobacterium paratuberculosis) protein is Group 1 truncated hemoglobin GlbN (glbN).